The following is a 461-amino-acid chain: MDPRISSRLRALALLVFVISITDGIPNRAKRSSSEINAEIDGLIQQLTTVDADTKGIQETLTELKTTVSANPSRISQVSAVVKSVGSSLAKFKTGDPYNIVSGCLDILSSIATTYNGPYGVGLGAVASLLSSVIGLFAQDGFKNSLKSIVDEAFKRYRDEELQGQLKGASRTFNDVIGTLKNLTDKDTAVTDLEFSLATSSVSVSQFSNMLGIIESRINTGSTTTDLAEAKRTVDFIFLYLELAVMRETLLTQLILFTKKLGKFENYANGISASIDANKQAVHDTILFLHQMEPKNAVCGAYYYPVHHSDVSEGIFTFTRYFGLPDPPRNTFQGVYRVENRYWPAWHICKESYMGNHMFRGCSYIKSAGVHISALDNGYLKLNLKGKNMYITKHAQGWAWGTADNDPGEQGYFIFVPLKSGYYMISTKKWPNYFVYMESSASGYIRSWHNNPGLQGHWKLT.

Residues 1–24 (MDPRISSRLRALALLVFVISITDG) form the signal peptide. The propeptide occupies 25–31 (IPNRAKR).

The protein belongs to the jellyfish toxin family. Type II subfamily. In terms of assembly, oligomer. Post-translationally, contains 2 disulfide bonds. In terms of tissue distribution, nematocytes.

The protein resides in the secreted. It is found in the nematocyst. The protein localises to the target cell membrane. Its function is as follows. The fraction containing this toxin and CfTX-B shows potent hemolytic activity. This fraction causes minor effects on the cardiovascular system of anesthetized rats (at 25 ug/kg), since it has no significant effects on heart rate but produces relatively small increases in mean arterial pressure. This Chironex fleckeri (Australian box jellyfish) protein is Toxin CfTX-B.